Reading from the N-terminus, the 274-residue chain is Proteasome subunit beta (274 aa).

The propeptide at 1–52 (MPDPTGVAGRLPAVFMTPGTSSFTDFLSVAAPDLLPGARGPLPAPVTDAAHG) is removed in mature form; by autocatalysis. The Nucleophile role is filled by T53.

The protein belongs to the peptidase T1B family. In terms of assembly, the 20S proteasome core is composed of 14 alpha and 14 beta subunits that assemble into four stacked heptameric rings, resulting in a barrel-shaped structure. The two inner rings, each composed of seven catalytic beta subunits, are sandwiched by two outer rings, each composed of seven alpha subunits. The catalytic chamber with the active sites is on the inside of the barrel. Has a gated structure, the ends of the cylinder being occluded by the N-termini of the alpha-subunits. Is capped by the proteasome-associated ATPase, ARC.

It is found in the cytoplasm. The enzyme catalyses Cleavage of peptide bonds with very broad specificity.. It participates in protein degradation; proteasomal Pup-dependent pathway. With respect to regulation, the formation of the proteasomal ATPase ARC-20S proteasome complex, likely via the docking of the C-termini of ARC into the intersubunit pockets in the alpha-rings, may trigger opening of the gate for substrate entry. Interconversion between the open-gate and close-gate conformations leads to a dynamic regulation of the 20S proteasome proteolysis activity. Its function is as follows. Component of the proteasome core, a large protease complex with broad specificity involved in protein degradation. The polypeptide is Proteasome subunit beta (Parafrankia sp. (strain EAN1pec)).